Consider the following 269-residue polypeptide: Ubiquinone/menaquinone biosynthesis C-methyltransferase UbiE (269 aa).

Residues T92, D113, and 141 to 142 contribute to the S-adenosyl-L-methionine site; that span reads NA.

This sequence belongs to the class I-like SAM-binding methyltransferase superfamily. MenG/UbiE family.

It carries out the reaction a 2-demethylmenaquinol + S-adenosyl-L-methionine = a menaquinol + S-adenosyl-L-homocysteine + H(+). The enzyme catalyses a 2-methoxy-6-(all-trans-polyprenyl)benzene-1,4-diol + S-adenosyl-L-methionine = a 5-methoxy-2-methyl-3-(all-trans-polyprenyl)benzene-1,4-diol + S-adenosyl-L-homocysteine + H(+). It participates in quinol/quinone metabolism; menaquinone biosynthesis; menaquinol from 1,4-dihydroxy-2-naphthoate: step 2/2. The protein operates within cofactor biosynthesis; ubiquinone biosynthesis. Its function is as follows. Methyltransferase required for the conversion of demethylmenaquinol (DMKH2) to menaquinol (MKH2) and the conversion of 2-polyprenyl-6-methoxy-1,4-benzoquinol (DDMQH2) to 2-polyprenyl-3-methyl-6-methoxy-1,4-benzoquinol (DMQH2). The chain is Ubiquinone/menaquinone biosynthesis C-methyltransferase UbiE from Brucella melitensis biotype 2 (strain ATCC 23457).